Reading from the N-terminus, the 210-residue chain is Silenced mating-type protein ALPHA2 (210 aa).

Met1 carries the post-translational modification N-acetylmethionine. Residues 1–102 form an N-terminal domain region; the sequence is MNKIPIKDLL…RSIENDRSNY (102 aa). A flexible linker region spans residues 103–128; the sequence is QLTQKNKSADGLVFNVVTQDMINKST. Positions 129–191 form a DNA-binding region, homeobox; TALE-type; it reads KPYRGHRFTK…NRRRKEKTIT (63 aa). Positions 190–210 are C-terminal tail; the sequence is ITIAPELADLLSGEPLAKKKE.

The protein belongs to the TALE/M-ATYP homeobox family.

It localises to the nucleus. Mating type proteins are sequence specific DNA-binding proteins that act as master switches in yeast differentiation by controlling gene expression in a cell type-specific fashion. Silenced copy of ALPHA2 at HML. In Saccharomyces cerevisiae (strain ATCC 204508 / S288c) (Baker's yeast), this protein is Silenced mating-type protein ALPHA2 (HMLALPHA2).